The primary structure comprises 191 residues: A-type ATP synthase subunit E (191 aa).

The protein belongs to the V-ATPase E subunit family. In terms of assembly, has multiple subunits with at least A(3), B(3), C, D, E, F, H, I and proteolipid K(x). The N-terminus is blocked.

The protein resides in the cell membrane. In terms of biological role, component of the A-type ATP synthase that produces ATP from ADP in the presence of a proton gradient across the membrane. This Sulfurisphaera tokodaii (strain DSM 16993 / JCM 10545 / NBRC 100140 / 7) (Sulfolobus tokodaii) protein is A-type ATP synthase subunit E.